Reading from the N-terminus, the 400-residue chain is Phosphoglycerate kinase (400 aa).

Substrate is bound by residues 22-24 (DFN), Arg38, 61-64 (HLGR), Arg119, and Arg152. Residues Lys205, Gly296, Glu327, and 353 to 356 (GGDT) contribute to the ATP site.

Belongs to the phosphoglycerate kinase family. In terms of assembly, monomer.

Its subcellular location is the cytoplasm. It catalyses the reaction (2R)-3-phosphoglycerate + ATP = (2R)-3-phospho-glyceroyl phosphate + ADP. The protein operates within carbohydrate degradation; glycolysis; pyruvate from D-glyceraldehyde 3-phosphate: step 2/5. This chain is Phosphoglycerate kinase, found in Campylobacter jejuni subsp. jejuni serotype O:23/36 (strain 81-176).